Consider the following 362-residue polypeptide: Peptide chain release factor 1 (362 aa).

An N5-methylglutamine modification is found at glutamine 240.

Belongs to the prokaryotic/mitochondrial release factor family. Methylated by PrmC. Methylation increases the termination efficiency of RF1.

The protein resides in the cytoplasm. In terms of biological role, peptide chain release factor 1 directs the termination of translation in response to the peptide chain termination codons UAG and UAA. The polypeptide is Peptide chain release factor 1 (Bifidobacterium longum (strain NCC 2705)).